A 122-amino-acid chain; its full sequence is MNAPAAFESFLLLDDKKIYIEKDTKVPNAAIFTINKEDHTLGNMLKIQLLKDPEVLFAGYKNPHPLEHKILLRVQTTNATTPADALTTAITDLVGELSLLEHRIDSAIKKCTQSTDTERGYN.

The protein belongs to the archaeal Rpo11/eukaryotic RPB11/RPC19 RNA polymerase subunit family. In terms of assembly, component of the RNA polymerase II (Pol II) complex consisting of 12 subunits.

It is found in the nucleus. DNA-dependent RNA polymerase catalyzes the transcription of DNA into RNA using the four ribonucleoside triphosphates as substrates. Component of RNA polymerase II which synthesizes mRNA precursors and many functional non-coding RNAs. Pol II is the central component of the basal RNA polymerase II transcription machinery. It is composed of mobile elements that move relative to each other. RPB11 is part of the core element with the central large cleft. This chain is Probable DNA-directed RNA polymerase II subunit RPB11 (rpb-11), found in Caenorhabditis briggsae.